We begin with the raw amino-acid sequence, 60 residues long: Homeobox protein engrailed-like A (60 aa).

Positions 1–41 form a DNA-binding region, homeobox; that stretch reads ADQLARLRAEFQANRYLTEERRQNLARELSLNEAQIKIWFQ.

This sequence belongs to the engrailed homeobox family.

It is found in the nucleus. The polypeptide is Homeobox protein engrailed-like A (Myxine glutinosa (Atlantic hagfish)).